The primary structure comprises 406 residues: Putative phosphate permease PH0640 (406 aa).

11 helical membrane passes run 2–22 (IPID…AWAI), 45–65 (AVLI…KTVT), 83–103 (VLIY…IIAT), 114–134 (SIIG…IVNW), 140–160 (VVLS…LVFR), 182–202 (FWIG…VLHG), 207–227 (IGIL…TSML), 265–285 (VANA…GLAG), 288–308 (VPVP…GVAT), 330–350 (FTID…GMPI), and 385–405 (FVTV…LLLI).

Belongs to the inorganic phosphate transporter (PiT) (TC 2.A.20) family.

The protein resides in the cell membrane. Potential transporter for phosphate. This chain is Putative phosphate permease PH0640, found in Pyrococcus horikoshii (strain ATCC 700860 / DSM 12428 / JCM 9974 / NBRC 100139 / OT-3).